A 512-amino-acid chain; its full sequence is Protein spinster homolog 3 (512 aa).

The disordered stretch occupies residues 1-30 (MAGGMSAECPEPGPGGLQGQSPGPGRQCPP). 12 consecutive transmembrane segments (helical) span residues 50–70 (VLCY…GVLL), 84–104 (GLLQ…FGYL), 112–132 (ATMS…SFIS), 145–165 (IVGT…GDLF), 173–193 (VLAV…VLGS), 204–224 (WALR…ILLV), 260–280 (FVWS…LGFW), 309–329 (LIFG…GAEA), 343–365 (LICA…LAPT), 377–397 (GELL…SVVV), 411–431 (VGHI…SSVL), and 450–470 (FLCC…TALY). Residues 481–512 (PVTGTPDSNDVDSNDLERQGLLSGAGASTEEP) form a disordered region.

This sequence belongs to the major facilitator superfamily. Spinster (TC 2.A.1.49) family.

The protein localises to the membrane. Functionally, sphingolipid transporter. This chain is Protein spinster homolog 3 (SPNS3), found in Homo sapiens (Human).